Reading from the N-terminus, the 220-residue chain is Deoxyribose-phosphate aldolase (220 aa).

Asp-89 acts as the Proton donor/acceptor in catalysis. The active-site Schiff-base intermediate with acetaldehyde is Lys-151. The active-site Proton donor/acceptor is Lys-180.

Belongs to the DeoC/FbaB aldolase family. DeoC type 1 subfamily.

The protein localises to the cytoplasm. The enzyme catalyses 2-deoxy-D-ribose 5-phosphate = D-glyceraldehyde 3-phosphate + acetaldehyde. The protein operates within carbohydrate degradation; 2-deoxy-D-ribose 1-phosphate degradation; D-glyceraldehyde 3-phosphate and acetaldehyde from 2-deoxy-alpha-D-ribose 1-phosphate: step 2/2. In terms of biological role, catalyzes a reversible aldol reaction between acetaldehyde and D-glyceraldehyde 3-phosphate to generate 2-deoxy-D-ribose 5-phosphate. This Streptococcus pneumoniae serotype 4 (strain ATCC BAA-334 / TIGR4) protein is Deoxyribose-phosphate aldolase.